The primary structure comprises 372 residues: Glutamate 5-kinase (372 aa).

Lysine 14 contacts ATP. Substrate is bound by residues serine 54, aspartate 141, and asparagine 153. 173 to 174 is an ATP binding site; it reads TD. Residues 280 to 358 enclose the PUA domain; sequence RGTLVLDAGA…DAIESLLGYS (79 aa).

This sequence belongs to the glutamate 5-kinase family.

Its subcellular location is the cytoplasm. The enzyme catalyses L-glutamate + ATP = L-glutamyl 5-phosphate + ADP. The protein operates within amino-acid biosynthesis; L-proline biosynthesis; L-glutamate 5-semialdehyde from L-glutamate: step 1/2. In terms of biological role, catalyzes the transfer of a phosphate group to glutamate to form L-glutamate 5-phosphate. This is Glutamate 5-kinase from Pseudomonas putida (strain W619).